The chain runs to 760 residues: Phosphoribosylformylglycinamidine synthase subunit PurL (760 aa).

The tract at residues 1–25 (MNMSLPADRDTAKKPSAQKPSAHAQ) is disordered. Histidine 69 is a catalytic residue. ATP is bound by residues tyrosine 72 and lysine 115. Position 117 (glutamate 117) interacts with Mg(2+). Substrate-binding positions include 118–121 (SHNH) and arginine 140. Residue histidine 119 is the Proton acceptor of the active site. Aspartate 141 contacts Mg(2+). Glutamine 265 contributes to the substrate binding site. Aspartate 293 is a Mg(2+) binding site. Residue 337 to 339 (ESQ) coordinates substrate. ATP-binding residues include asparagine 519 and glycine 556. Asparagine 557 serves as a coordination point for Mg(2+). Serine 559 contacts substrate.

This sequence belongs to the FGAMS family. Monomer. Part of the FGAM synthase complex composed of 1 PurL, 1 PurQ and 2 PurS subunits.

The protein localises to the cytoplasm. It catalyses the reaction N(2)-formyl-N(1)-(5-phospho-beta-D-ribosyl)glycinamide + L-glutamine + ATP + H2O = 2-formamido-N(1)-(5-O-phospho-beta-D-ribosyl)acetamidine + L-glutamate + ADP + phosphate + H(+). The protein operates within purine metabolism; IMP biosynthesis via de novo pathway; 5-amino-1-(5-phospho-D-ribosyl)imidazole from N(2)-formyl-N(1)-(5-phospho-D-ribosyl)glycinamide: step 1/2. Part of the phosphoribosylformylglycinamidine synthase complex involved in the purines biosynthetic pathway. Catalyzes the ATP-dependent conversion of formylglycinamide ribonucleotide (FGAR) and glutamine to yield formylglycinamidine ribonucleotide (FGAM) and glutamate. The FGAM synthase complex is composed of three subunits. PurQ produces an ammonia molecule by converting glutamine to glutamate. PurL transfers the ammonia molecule to FGAR to form FGAM in an ATP-dependent manner. PurS interacts with PurQ and PurL and is thought to assist in the transfer of the ammonia molecule from PurQ to PurL. This is Phosphoribosylformylglycinamidine synthase subunit PurL from Tropheryma whipplei (strain TW08/27) (Whipple's bacillus).